Here is a 181-residue protein sequence, read N- to C-terminus: ADP-ribosylation factor 1 (181 aa).

Gly2 carries N-myristoyl glycine lipidation. GTP contacts are provided by residues 24 to 31 (GLDAAGKT), 67 to 71 (DVGGQ), and 126 to 129 (NKQD).

The protein belongs to the small GTPase superfamily. Arf family.

The protein localises to the golgi apparatus. The enzyme catalyses GTP + H2O = GDP + phosphate + H(+). Its function is as follows. GTP-binding protein involved in protein trafficking; may modulate vesicle budding and uncoating within the Golgi apparatus. The chain is ADP-ribosylation factor 1 (ARF1) from Daucus carota (Wild carrot).